The chain runs to 91 residues: uncharacterized protein (91 aa).

The segment at 71–91 (EANDRPSKKCGSGNLRVEKLV) is disordered.

This is an uncharacterized protein from Archaeoglobus fulgidus (strain ATCC 49558 / DSM 4304 / JCM 9628 / NBRC 100126 / VC-16).